Here is a 630-residue protein sequence, read N- to C-terminus: Chaperone protein DnaK (630 aa).

A Phosphothreonine; by autocatalysis modification is found at threonine 197. Positions 604 to 618 (KNNESVKNNESVKNN) are enriched in polar residues. The segment at 604–630 (KNNESVKNNESVKNNESVKDVDFEEIK) is disordered. Over residues 619–630 (ESVKDVDFEEIK) the composition is skewed to basic and acidic residues.

Belongs to the heat shock protein 70 family.

In terms of biological role, acts as a chaperone. In Karelsulcia muelleri (strain GWSS) (Sulcia muelleri), this protein is Chaperone protein DnaK.